Consider the following 300-residue polypeptide: Cholesterol 25-hydroxylase-like protein (300 aa).

N-linked (GlcNAc...) asparagine glycosylation is present at Asn-9. Helical transmembrane passes span 43–63 (LFPPFYALSIDYTWVAVFTFI), 95–115 (LQGWNQLLWIYPMALVQLIWV), and 130–152 (MVSQLAIFFLAFDFTYFWFHYFN). Residues 135–266 (AIFFLAFDFT…WFNYLDRLMG (132 aa)) form the Fatty acid hydroxylase domain. The Histidine box-1 signature appears at 148 to 152 (FHYFN). The Histidine box-2 motif lies at 163 to 167 (HSVHH). The chain crosses the membrane as a helical span at residues 180–200 (LHPFELFFVATFITTVPWIFP). Residues 242 to 248 (AHDMHHL) carry the Histidine box-3 motif.

This sequence belongs to the sterol desaturase family. Requires Fe cation as cofactor.

It localises to the membrane. Probable sterol desaturase. The protein is Cholesterol 25-hydroxylase-like protein of Caenorhabditis briggsae.